A 532-amino-acid polypeptide reads, in one-letter code: Protein DETOXIFICATION 48 (532 aa).

Transmembrane regions (helical) follow at residues 65–85 (ISGP…ISML), 95–115 (LAGG…VISG), 136–156 (LGLT…PISF), 174–194 (ISSV…LLSL), 211–231 (VTYS…LLVV), 235–255 (MGVA…VVLL), 279–301 (GWSA…WWWY), 322–342 (GILI…SLGV), 363–383 (IISL…AVLV), 397–417 (ILQL…GNCP), 437–457 (INLG…GFVF), and 464–484 (LWFG…CALL). A disordered region spans residues 496–532 (EELTSQTPGKSPPLLPIASSKSRSTSGTEDMMRTMLV). Over residues 514 to 523 (SSKSRSTSGT) the composition is skewed to polar residues.

This sequence belongs to the multi antimicrobial extrusion (MATE) (TC 2.A.66.1) family. Highly expressed in shoot apices relative to leaves. At vegetative stages, highly expressed at the stipules. At reproductive stages, most highly expressed in the mature pollen. Also expressed in the tips of sepals.

It is found in the golgi apparatus membrane. It localises to the late endosome membrane. Functionally, functions as a multidrug and toxin extrusion transporter. Contributes to iron homeostasis during stress responses and senescence. Could be involved in specifying the lateral organ initiation rate. May act as a negative regulator of hypocotyl cell elongation in the light. The sequence is that of Protein DETOXIFICATION 48 from Arabidopsis thaliana (Mouse-ear cress).